An 89-amino-acid polypeptide reads, in one-letter code: Signal recognition particle 19 kDa protein (89 aa).

The protein belongs to the SRP19 family. In terms of assembly, part of the signal recognition particle protein translocation system, which is composed of SRP and FtsY. Archaeal SRP consists of a 7S RNA molecule of 300 nucleotides and two protein subunits: SRP54 and SRP19.

It is found in the cytoplasm. Functionally, involved in targeting and insertion of nascent membrane proteins into the cytoplasmic membrane. Binds directly to 7S RNA and mediates binding of the 54 kDa subunit of the SRP. The polypeptide is Signal recognition particle 19 kDa protein (Methanococcus maripaludis (strain C7 / ATCC BAA-1331)).